Reading from the N-terminus, the 382-residue chain is 1-deoxy-D-xylulose 5-phosphate reductoisomerase (382 aa).

The NADPH site is built by T10, G11, S12, I13, G36, and N122. K123 provides a ligand contact to 1-deoxy-D-xylulose 5-phosphate. Residue E124 participates in NADPH binding. D148 provides a ligand contact to Mn(2+). 1-deoxy-D-xylulose 5-phosphate-binding residues include S149, E150, S174, and H197. E150 lines the Mn(2+) pocket. G203 is an NADPH binding site. Residues S210, N215, K216, and E219 each coordinate 1-deoxy-D-xylulose 5-phosphate. E219 is a binding site for Mn(2+).

It belongs to the DXR family. Mg(2+) is required as a cofactor. It depends on Mn(2+) as a cofactor.

The enzyme catalyses 2-C-methyl-D-erythritol 4-phosphate + NADP(+) = 1-deoxy-D-xylulose 5-phosphate + NADPH + H(+). It participates in isoprenoid biosynthesis; isopentenyl diphosphate biosynthesis via DXP pathway; isopentenyl diphosphate from 1-deoxy-D-xylulose 5-phosphate: step 1/6. In terms of biological role, catalyzes the NADPH-dependent rearrangement and reduction of 1-deoxy-D-xylulose-5-phosphate (DXP) to 2-C-methyl-D-erythritol 4-phosphate (MEP). This Chlorobium chlorochromatii (strain CaD3) protein is 1-deoxy-D-xylulose 5-phosphate reductoisomerase.